The primary structure comprises 112 residues: Large ribosomal subunit protein bL17 (112 aa).

It belongs to the bacterial ribosomal protein bL17 family. As to quaternary structure, part of the 50S ribosomal subunit. Contacts protein L32.

This is Large ribosomal subunit protein bL17 from Heliobacterium modesticaldum (strain ATCC 51547 / Ice1).